The chain runs to 484 residues: tRNA sulfurtransferase (484 aa).

Residues 63–167 (REMIERLTCT…DQRLYVIHNQ (105 aa)) enclose the THUMP domain. ATP is bound by residues 185-186 (LM), Lys-267, Gly-289, and Gln-298. A disulfide bond links Cys-346 and Cys-457. The 79-residue stretch at 405–483 (ALPGQIVIDI…GHANVRVYRP (79 aa)) folds into the Rhodanese domain. The Cysteine persulfide intermediate role is filled by Cys-457.

This sequence belongs to the ThiI family.

The protein resides in the cytoplasm. It carries out the reaction [ThiI sulfur-carrier protein]-S-sulfanyl-L-cysteine + a uridine in tRNA + 2 reduced [2Fe-2S]-[ferredoxin] + ATP + H(+) = [ThiI sulfur-carrier protein]-L-cysteine + a 4-thiouridine in tRNA + 2 oxidized [2Fe-2S]-[ferredoxin] + AMP + diphosphate. The enzyme catalyses [ThiS sulfur-carrier protein]-C-terminal Gly-Gly-AMP + S-sulfanyl-L-cysteinyl-[cysteine desulfurase] + AH2 = [ThiS sulfur-carrier protein]-C-terminal-Gly-aminoethanethioate + L-cysteinyl-[cysteine desulfurase] + A + AMP + 2 H(+). It functions in the pathway cofactor biosynthesis; thiamine diphosphate biosynthesis. Its function is as follows. Catalyzes the ATP-dependent transfer of a sulfur to tRNA to produce 4-thiouridine in position 8 of tRNAs, which functions as a near-UV photosensor. Also catalyzes the transfer of sulfur to the sulfur carrier protein ThiS, forming ThiS-thiocarboxylate. This is a step in the synthesis of thiazole, in the thiamine biosynthesis pathway. The sulfur is donated as persulfide by IscS. This chain is tRNA sulfurtransferase, found in Pseudomonas putida (strain ATCC 47054 / DSM 6125 / CFBP 8728 / NCIMB 11950 / KT2440).